The primary structure comprises 549 residues: Glucose-6-phosphate isomerase (549 aa).

The Proton donor role is filled by glutamate 355. Catalysis depends on residues histidine 386 and lysine 514.

Belongs to the GPI family.

Its subcellular location is the cytoplasm. The enzyme catalyses alpha-D-glucose 6-phosphate = beta-D-fructose 6-phosphate. Its pathway is carbohydrate biosynthesis; gluconeogenesis. It participates in carbohydrate degradation; glycolysis; D-glyceraldehyde 3-phosphate and glycerone phosphate from D-glucose: step 2/4. Its function is as follows. Catalyzes the reversible isomerization of glucose-6-phosphate to fructose-6-phosphate. This Pectobacterium carotovorum subsp. carotovorum (strain PC1) protein is Glucose-6-phosphate isomerase.